The primary structure comprises 361 residues: Core-capsid bridging protein (361 aa).

The span at 311–321 (RRRRVARRSKS) shows a compositional bias: basic residues. Positions 311–331 (RRRRVARRSKSTGRFVAAPRK) are disordered.

This sequence belongs to the adenoviridae core-capsid bridging protein family. In terms of assembly, monomer. Homodimer. Exists in equilibrium between monomers and dimers in solution. Interacts with the histone-like nucleoprotein; this interactions bridge the virus core to the capsid. Interacts with core protein X; this interactions bridge the virus core to the capsid. Interacts with the endosome lysis protein VI; this interactions bridge the virus core to the capsid. Interacts with the peripentonal hexons. Interacts with host NPM1; this interaction might play a role in virus assembly.

It is found in the virion. Its subcellular location is the host nucleus. The protein localises to the host nucleolus. In terms of biological role, associates loosely with the viral DNA to form an outer shell around the nucleoprotein-DNA complex and links it with the capsid by binding the endosome lysis protein. Dissociates from the viral genome during entry. Might be involved in nuclear capsid assembly of the viral particles through its association with NPM1/nucleophosmin. The polypeptide is Core-capsid bridging protein (Bovine adenovirus 2 (BAdV-2)).